The sequence spans 121 residues: Neuromedin-B (121 aa).

Residues 1–24 form the signal peptide; that stretch reads MARRAGGARMFGSLLLFALLAAGV. A Methionine amide modification is found at Met56. A propeptide spanning residues 60–121 is cleaved from the precursor; sequence SLEPSSPSPL…RRLLVQILQK (62 aa).

It belongs to the bombesin/neuromedin-B/ranatensin family.

It is found in the secreted. The protein resides in the cell projection. It localises to the neuron projection. Functionally, stimulates smooth muscle contraction. Induces sighing by acting directly on the pre-Botzinger complex, a cluster of several thousand neurons in the ventrolateral medulla responsible for inspiration during respiratory activity. Contributes to the induction of sneezing following exposure to chemical irritants or allergens which causes release of NMB by nasal sensory neurons and activation of NMBR-expressing neurons in the sneeze-evoking region of the brainstem. These in turn activate neurons of the caudal ventral respiratory group, giving rise to the sneezing response. Contributes to induction of acute itch, possibly through activation of the NMBR receptor on dorsal root ganglion neurons. Increases expression of NMBR and steroidogenic mediators STAR, CYP11A1 and HSD3B1 in Leydig cells, induces secretion of testosterone by Leydig cells and also promotes Leydig cell proliferation. Plays a role in the innate immune response to influenza A virus infection by enhancing interferon alpha expression and reducing expression of IL6. Plays a role in CSF1-induced proliferation of osteoclast precursors by contributing to the positive regulation of the expression of the CSF1 receptor CSF1R. In Homo sapiens (Human), this protein is Neuromedin-B (NMB).